The following is a 255-amino-acid chain: (R)-S-adenosyl-L-methionine hydrolase (255 aa).

The adenosine site is built by Asp-9, Asp-70, and Asn-186. (R)-S-adenosyl-L-methionine is bound by residues Asn-186, Ser-227, Glu-232, and Val-235. Val-235 is an adenosine binding site.

This sequence belongs to the SAM hydrolase / SAM-dependent halogenase family. As to quaternary structure, homotrimer.

The catalysed reaction is (R)-S-adenosyl-L-methionine + H2O = adenosine + L-methionine + H(+). In terms of biological role, catalyzes the hydrolysis of S-adenosyl-L-methionine (SAM) into adenosine and L-methionine. Does not have chlorinase or fluorinase activity. The chain is (R)-S-adenosyl-L-methionine hydrolase from Thermus thermophilus (strain ATCC 27634 / DSM 579 / HB8).